The primary structure comprises 144 residues: Large ribosomal subunit protein uL22 (144 aa).

Positions 124–137 (RLKKRVLGQNKRKQ) are enriched in basic residues. The disordered stretch occupies residues 124 to 144 (RLKKRVLGQNKRKQSVSGEKK).

Belongs to the universal ribosomal protein uL22 family. As to quaternary structure, part of the 50S ribosomal subunit.

In terms of biological role, this protein binds specifically to 23S rRNA; its binding is stimulated by other ribosomal proteins, e.g. L4, L17, and L20. It is important during the early stages of 50S assembly. It makes multiple contacts with different domains of the 23S rRNA in the assembled 50S subunit and ribosome. Its function is as follows. The globular domain of the protein is located near the polypeptide exit tunnel on the outside of the subunit, while an extended beta-hairpin is found that lines the wall of the exit tunnel in the center of the 70S ribosome. The chain is Large ribosomal subunit protein uL22 from Mycoplasmoides gallisepticum (strain R(low / passage 15 / clone 2)) (Mycoplasma gallisepticum).